Reading from the N-terminus, the 452-residue chain is Tubulin alpha-8 chain (452 aa).

Q15, E74, S143, G147, T148, T182, N209, and N231 together coordinate GTP. E74 contacts Mg(2+). Residue E257 is part of the active site.

This sequence belongs to the tubulin family. As to quaternary structure, dimer of alpha and beta chains. A typical microtubule is a hollow water-filled tube with an outer diameter of 25 nm and an inner diameter of 15 nM. Alpha-beta heterodimers associate head-to-tail to form protofilaments running lengthwise along the microtubule wall with the beta-tubulin subunit facing the microtubule plus end conferring a structural polarity. Microtubules usually have 13 protofilaments but different protofilament numbers can be found in some organisms and specialized cells. It depends on Mg(2+) as a cofactor.

It localises to the cytoplasm. It is found in the cytoskeleton. It catalyses the reaction GTP + H2O = GDP + phosphate + H(+). Functionally, tubulin is the major constituent of microtubules, a cylinder consisting of laterally associated linear protofilaments composed of alpha- and beta-tubulin heterodimers. Microtubules grow by the addition of GTP-tubulin dimers to the microtubule end, where a stabilizing cap forms. Below the cap, tubulin dimers are in GDP-bound state, owing to GTPase activity of alpha-tubulin. The protein is Tubulin alpha-8 chain (tba-8) of Caenorhabditis elegans.